The chain runs to 231 residues: ATP phosphoribosyltransferase (231 aa).

Belongs to the ATP phosphoribosyltransferase family. Short subfamily. Heteromultimer composed of HisG and HisZ subunits.

It is found in the cytoplasm. The enzyme catalyses 1-(5-phospho-beta-D-ribosyl)-ATP + diphosphate = 5-phospho-alpha-D-ribose 1-diphosphate + ATP. It functions in the pathway amino-acid biosynthesis; L-histidine biosynthesis; L-histidine from 5-phospho-alpha-D-ribose 1-diphosphate: step 1/9. In terms of biological role, catalyzes the condensation of ATP and 5-phosphoribose 1-diphosphate to form N'-(5'-phosphoribosyl)-ATP (PR-ATP). Has a crucial role in the pathway because the rate of histidine biosynthesis seems to be controlled primarily by regulation of HisG enzymatic activity. This is ATP phosphoribosyltransferase from Brucella melitensis biotype 2 (strain ATCC 23457).